A 137-amino-acid chain; its full sequence is uncharacterized protein (137 aa).

The chain crosses the membrane as a helical span at residues 75–91 (MFLDAMVILAVASGVSL). Residues 93-116 (PQLPGRRSHNASTPGAKKPGKDHG) form a disordered region.

It localises to the membrane. This is an uncharacterized protein from Saccharomyces cerevisiae (strain ATCC 204508 / S288c) (Baker's yeast).